A 617-amino-acid chain; its full sequence is Dihydroxy-acid dehydratase (617 aa).

D81 serves as a coordination point for Mg(2+). Position 122 (C122) interacts with [2Fe-2S] cluster. Mg(2+) is bound by residues D123 and K124. Residue K124 is modified to N6-carboxylysine. C195 is a [2Fe-2S] cluster binding site. A Mg(2+)-binding site is contributed by E491. S517 (proton acceptor) is an active-site residue.

This sequence belongs to the IlvD/Edd family. As to quaternary structure, homodimer. The cofactor is [2Fe-2S] cluster. It depends on Mg(2+) as a cofactor.

The enzyme catalyses (2R)-2,3-dihydroxy-3-methylbutanoate = 3-methyl-2-oxobutanoate + H2O. It catalyses the reaction (2R,3R)-2,3-dihydroxy-3-methylpentanoate = (S)-3-methyl-2-oxopentanoate + H2O. The protein operates within amino-acid biosynthesis; L-isoleucine biosynthesis; L-isoleucine from 2-oxobutanoate: step 3/4. It functions in the pathway amino-acid biosynthesis; L-valine biosynthesis; L-valine from pyruvate: step 3/4. Functions in the biosynthesis of branched-chain amino acids. Catalyzes the dehydration of (2R,3R)-2,3-dihydroxy-3-methylpentanoate (2,3-dihydroxy-3-methylvalerate) into 2-oxo-3-methylpentanoate (2-oxo-3-methylvalerate) and of (2R)-2,3-dihydroxy-3-methylbutanoate (2,3-dihydroxyisovalerate) into 2-oxo-3-methylbutanoate (2-oxoisovalerate), the penultimate precursor to L-isoleucine and L-valine, respectively. The chain is Dihydroxy-acid dehydratase from Rhodospirillum rubrum (strain ATCC 11170 / ATH 1.1.1 / DSM 467 / LMG 4362 / NCIMB 8255 / S1).